The following is a 242-amino-acid chain: MANPDTIFSTPIDKIGDFTFDERVAEVFPDMIQRSIPGYSNIISAIGMLAERYAKPHSNVYDLGCSLGAATLSMRRSINQEGCQIIGVDNSSAMVERCRLLVNAYRSDTPVTILEADIRDVDIQDASVVVLNFTLQFLAPADRHALLEKIYAGLRPGGILILSEKYIFEDENANELLIDLHHDFKRANGYSELEISQKRSAIENVMLPDTIDVHKKRFNDIGFKSSEVWFQCFNFGSMFAIK.

Residues Tyr-39, 64–66 (GCS), 89–90 (DN), 117–118 (DI), Asn-132, and Arg-199 each bind S-adenosyl-L-methionine.

The protein belongs to the class I-like SAM-binding methyltransferase superfamily. Cx-SAM synthase family. Homodimer.

It carries out the reaction prephenate + S-adenosyl-L-methionine = carboxy-S-adenosyl-L-methionine + 3-phenylpyruvate + H2O. Its function is as follows. Catalyzes the conversion of S-adenosyl-L-methionine (SAM) to carboxy-S-adenosyl-L-methionine (Cx-SAM). This is Carboxy-S-adenosyl-L-methionine synthase from Aliivibrio fischeri (strain MJ11) (Vibrio fischeri).